A 265-amino-acid chain; its full sequence is 4-hydroxy-tetrahydrodipicolinate reductase (265 aa).

Residues 7–12 (GASGRM) and aspartate 33 contribute to the NAD(+) site. NADP(+) is bound at residue arginine 34. NAD(+) contacts are provided by residues 96-98 (GTT) and 120-123 (AANM). Histidine 153 (proton donor/acceptor) is an active-site residue. (S)-2,3,4,5-tetrahydrodipicolinate is bound at residue histidine 154. Residue lysine 157 is the Proton donor of the active site. Residue 163–164 (GT) participates in (S)-2,3,4,5-tetrahydrodipicolinate binding.

Belongs to the DapB family.

The protein localises to the cytoplasm. The catalysed reaction is (S)-2,3,4,5-tetrahydrodipicolinate + NAD(+) + H2O = (2S,4S)-4-hydroxy-2,3,4,5-tetrahydrodipicolinate + NADH + H(+). It carries out the reaction (S)-2,3,4,5-tetrahydrodipicolinate + NADP(+) + H2O = (2S,4S)-4-hydroxy-2,3,4,5-tetrahydrodipicolinate + NADPH + H(+). Its pathway is amino-acid biosynthesis; L-lysine biosynthesis via DAP pathway; (S)-tetrahydrodipicolinate from L-aspartate: step 4/4. In terms of biological role, catalyzes the conversion of 4-hydroxy-tetrahydrodipicolinate (HTPA) to tetrahydrodipicolinate. In Burkholderia ambifaria (strain MC40-6), this protein is 4-hydroxy-tetrahydrodipicolinate reductase.